Reading from the N-terminus, the 237-residue chain is Uridylate kinase (237 aa).

Position 12–15 (12–15 (KLSG)) interacts with ATP. Residues 20–25 (GENGFG) are involved in allosteric activation by GTP. Position 54 (Gly-54) interacts with UMP. The ATP site is built by Gly-55 and Arg-59. UMP is bound by residues Asp-72 and 133 to 140 (TGNPYFST). ATP is bound by residues Tyr-166 and Asp-169.

It belongs to the UMP kinase family. As to quaternary structure, homohexamer.

The protein localises to the cytoplasm. The enzyme catalyses UMP + ATP = UDP + ADP. Its pathway is pyrimidine metabolism; CTP biosynthesis via de novo pathway; UDP from UMP (UMPK route): step 1/1. Its activity is regulated as follows. Allosterically activated by GTP. Inhibited by UTP. Catalyzes the reversible phosphorylation of UMP to UDP. The polypeptide is Uridylate kinase (Clostridium perfringens (strain SM101 / Type A)).